Reading from the N-terminus, the 849-residue chain is Dopamine receptor 2 (849 aa).

Residues 1-39 are Extracellular-facing; it reads MEAGETWNVSLEWPPPSLDLSTITQTPSTIVGSGIPLNY. N-linked (GlcNAc...) asparagine glycosylation occurs at asparagine 8. The chain crosses the membrane as a helical span at residues 40–60; that stretch reads AGLSLIVIPLITLLGNLLVII. The Cytoplasmic portion of the chain corresponds to 61 to 70; the sequence is SVLRYRALQS. The chain crosses the membrane as a helical span at residues 71 to 91; sequence AINFLILGLAVADLLVAIIVM. Residues 92 to 112 are Extracellular-facing; the sequence is PYAVYVYVTNGDWYLGNLMCD. A disulfide bond links cysteine 111 and cysteine 190. The helical transmembrane segment at 113–133 threads the bilayer; that stretch reads IYMASDVCCSTASILLLAVIS. The Cytoplasmic segment spans residues 134 to 155; that stretch reads FDRYRAVSLPIQYSRQSQNVKR. A helical membrane pass occupies residues 156 to 176; it reads VWTLIAVIWLVSLTLASPMVF. The Extracellular portion of the chain corresponds to 177 to 203; the sequence is GVNVRPPDANPYECRFYNAEFSILSSM. Residues 183–849 form a required for the interaction with gpa-14 region; it reads PDANPYECRF…HHFSNKQAHV (667 aa). A helical membrane pass occupies residues 204-224; the sequence is ISFVIPCFLVLFVYIRIIIAL. The Cytoplasmic segment spans residues 225 to 759; sequence KKREKAAKMR…QRKEKRATKT (535 aa). The interval 450 to 515 is disordered; the sequence is RRSSYADDSQ…NNSRTASITN (66 aa). Over residues 457–470 the composition is skewed to low complexity; that stretch reads DSQPTSSQTSSGDG. Residues 477–498 show a composition bias toward basic residues; that stretch reads GQKRFRNLSRNYSTKHHRKVVK. The span at 501–515 shows a compositional bias: polar residues; that stretch reads RGNSRNNSRTASITN. The helical transmembrane segment at 760 to 780 threads the bilayer; the sequence is LGVVVGVFLVCWVPFFVINIL. Over 781–798 the chain is Extracellular; sequence NAVCILLNKDSCQVGYDL. A helical membrane pass occupies residues 799–819; it reads FFYCTWIGYMNSFMNPIIYTI. Residues 820 to 849 lie on the Cytoplasmic side of the membrane; sequence FNTEFRRAFKSIIFGRNSTRHHFSNKQAHV.

It belongs to the G-protein coupled receptor 1 family. Interacts (via C-terminus) with the G-alpha protein gpa-14; the interaction is direct. Expressed in all dopaminergic neurons. Expressed in neurons around the nerve ring and the posterior side of the body including PDE neurons. In hermaphrodites, expressed in the head and tail ganglia including in the RIA interneuron pair, and in a subset of sublateral interneurons and the PDA neuron in the tail. Expressed in cholinergic SIA neurons. Also expressed in the male tail. In males, expressed in the dorsal spicule protractor, ventral spicule protractor, dorsal spicule retractor and ventral spicule retractor muscles and the sensory post-cloacal sensilla B (PCB) neuron. In males, expressed in the sensory hook neurons HOA.

It is found in the cell membrane. G-protein coupled receptor which binds to the neurotransmitter dopamine with high affinity leading to the activation of an associated G-protein and downstream signaling pathways. Couples to G-proteins to inhibit adenylate cyclase (AC) activity and cAMP production. Inhibits synaptic vesicle fusion to negatively regulate the release of dopamine at dopaminergic neuron synapses. Antagonizes octopamine signaling in response to food by promoting the dopamine-mediated suppression of crh-1/CREB1 transcription factor activation in cholinergic SIA neurons. This is most likely in association with the G(o)-alpha G-protein subunit goa-1. In association with the G-alpha protein gpa-14, modulates two types of learning behavior: touch habituation and chemosensory associative conditioning. May act partly via tsp-17 to negatively regulate dopamine reuptake transporter dat-1 activity. Plays a role in behavioral plasticity and regulates the decision-making process when conflicting alternatives are present. Promotes male mating behavior by antagonizing acetylcholine signaling to control the protrusions of copulatory spicules from the tail of males during hermaphrodite vulval location. Modulates unc-7 activity at gap junctions to promote inhibitory neuronal signaling transduction between chemosensory and mechanosensory neurons, and thus ensures spicule insertion attempts are confined to the hermaphrodite vulva during copulation. In terms of biological role, G-protein coupled receptor which binds to the neurotransmitter dopamine with high affinity leading to the activation of an associated G-protein and downstream signaling pathways. Couples to G-proteins to inhibit adenylate cyclase (AC) activity and cAMP production. This is Dopamine receptor 2 from Caenorhabditis elegans.